A 920-amino-acid polypeptide reads, in one-letter code: 2-oxoadipate dehydrogenase complex component E1 (920 aa).

The disordered stretch occupies residues 299–322 (QGKTRGRQQVKQDGDYSTDPHSRP). Positions 308–322 (VKQDGDYSTDPHSRP) are enriched in basic and acidic residues.

Belongs to the alpha-ketoglutarate dehydrogenase family. As to quaternary structure, the 2-oxoadipate dehydrogenase complex is composed of OADH (2-oxoadipate dehydrogenase; E1a), DLST (dihydrolipoamide succinyltransferase; E2) and DLD (dihydrolipoamide dehydrogenase; E3). E1a functional unit is a dimer. It depends on thiamine diphosphate as a cofactor.

It is found in the mitochondrion. The catalysed reaction is N(6)-[(R)-lipoyl]-L-lysyl-[protein] + 2-oxoadipate + H(+) = N(6)-[(R)-S(8)-glutaryldihydrolipoyl]-L-lysyl-[protein] + CO2. It participates in amino-acid degradation. Functionally, 2-oxoadipate dehydrogenase (E1a) component of the 2-oxoadipate dehydrogenase complex (OADHC). Participates in the first step, rate limiting for the overall conversion of 2-oxoadipate (alpha-ketoadipate) to glutaryl-CoA and CO(2) catalyzed by the whole OADHC. Catalyzes the irreversible decarboxylation of 2-oxoadipate via the thiamine diphosphate (ThDP) cofactor and subsequent transfer of the decarboxylated acyl intermediate on an oxidized dihydrolipoyl group that is covalently amidated to the E2 enzyme (dihydrolipoyllysine-residue succinyltransferase or DLST). Can catalyze the decarboxylation of 2-oxoglutarate in vitro, but at a much lower rate than 2-oxoadipate. Responsible for the last step of L-lysine, L-hydroxylysine and L-tryptophan catabolism with the common product being 2-oxoadipate. The chain is 2-oxoadipate dehydrogenase complex component E1 (dhtkd1) from Danio rerio (Zebrafish).